A 109-amino-acid polypeptide reads, in one-letter code: Large ribosomal subunit protein uL24 (109 aa).

Belongs to the universal ribosomal protein uL24 family. Part of the 50S ribosomal subunit.

Its function is as follows. One of two assembly initiator proteins, it binds directly to the 5'-end of the 23S rRNA, where it nucleates assembly of the 50S subunit. Functionally, one of the proteins that surrounds the polypeptide exit tunnel on the outside of the subunit. This chain is Large ribosomal subunit protein uL24, found in Ehrlichia canis (strain Jake).